The chain runs to 621 residues: Signal recognition particle receptor subunit alpha homolog (621 aa).

The tract at residues 1–158 (MFDQLAVFTP…KKFEQYFRIK (158 aa)) is SRX. The interval 167–217 (HINPDNFTKNGSVPQSHNKNTKKKLRDTKGKKQSTGNVGSGRKWGRDGGML) is disordered. A compositionally biased stretch (polar residues) spans 171 to 183 (DNFTKNGSVPQSH). A compositionally biased stretch (basic residues) spans 185–198 (KNTKKKLRDTKGKK). Ser-239 carries the post-translational modification Phosphoserine. The segment at 398–620 (YVFSIVGVNG…SVKWAVNTLM (223 aa)) is NG domain. Residues 404 to 411 (GVNGVGKS) and 510 to 514 (DTAGR) each bind GTP. A Phosphoserine modification is found at Ser-523. 572-575 (SKCD) is a binding site for GTP.

This sequence belongs to the GTP-binding SRP family. As to quaternary structure, heterodimer of an alpha and a beta chain.

The protein localises to the endoplasmic reticulum membrane. Component of the SRP (signal recognition particle) receptor (SR). Ensures, in conjunction with the signal recognition particle, the correct targeting of the nascent secretory proteins to the endoplasmic reticulum membrane system. GTP hydrolysis may enhance the fidelity of and provide unidirectionality to the targeting reaction. It is important but not essential for cell growth. May be directly involved in mitochondrial protein import. In Saccharomyces cerevisiae (strain ATCC 204508 / S288c) (Baker's yeast), this protein is Signal recognition particle receptor subunit alpha homolog (SRP101).